Consider the following 658-residue polypeptide: MAELQTGKPTPLGASFDGNGVNFALFSADAERVELCVFDERQQEQRIVLTARSGDIWHGYLPDAQPGLRYGFRVDGPFEPSQGLRFNPHKLLLDPCARQLDGWVVDDASLQGGIDQRDERDSAEIMAKCVVTAEDYDWQDDQHPQTPWNQTVIYEAHVRGLTQLHPDIPEDIRGSYAALGHPVMIDYLTSLGITALELLPVQQHADEPRLQQIGLRNYWGYNVLLPFAVDNSLAAGDDALNEFRDAVKALHNAGIEVILDVVFNHSAELDVEGPTLCQRGIDNRSYYWLGDSGEYHNWTGCGNVLRLNHPAVMDWVMDCLRFWREVCHVDGFRFDLATVLGRTPDFTAAAPLLSAMKNDNRLQGCKLIAEPWDIGHGGYQLGQFPTPFAEWSDRYRDDMRRFWLHGDISLGAFARRFAASSDIFQQRDRLPYASINKLTAHDGFTLRDLVSFNHKHNDANGEGNRDGTDSNFSNNHGTEGLEADDDIHQRRQASQKALLTTLILSQGTPMLLAGDELGHSQQGNNNAYCQDNELTWLHWDHADRGLREFVAGLIQLRRTIPALQQETWWQEGDGAVQWLNREGQPLTPPQWEQGEHQLQILLSGRWLVLVNASLHAGAFMLPEGHWQVSPPFDETNPPEGGMWHGQAQAVCVLIKQTA.

Residue Asp335 is the Nucleophile of the active site. Glu370 serves as the catalytic Proton donor. Residues 457–468 are compositionally biased toward basic and acidic residues; sequence NDANGEGNRDGT. The disordered stretch occupies residues 457-481; that stretch reads NDANGEGNRDGTDSNFSNNHGTEGL.

This sequence belongs to the glycosyl hydrolase 13 family.

It catalyses the reaction Hydrolysis of (1-&gt;6)-alpha-D-glucosidic linkages to branches with degrees of polymerization of three or four glucose residues in limit dextrin.. It participates in glycan degradation; glycogen degradation. Its function is as follows. Removes maltotriose and maltotetraose chains that are attached by 1,6-alpha-linkage to the limit dextrin main chain, generating a debranched limit dextrin. The chain is Glycogen debranching enzyme from Pectobacterium atrosepticum (strain SCRI 1043 / ATCC BAA-672) (Erwinia carotovora subsp. atroseptica).